The chain runs to 286 residues: Formyltetrahydrofolate deformylase (286 aa).

The ACT domain occupies Val8–Gln88. Asp230 is an active-site residue.

It belongs to the PurU family.

It carries out the reaction (6R)-10-formyltetrahydrofolate + H2O = (6S)-5,6,7,8-tetrahydrofolate + formate + H(+). It participates in purine metabolism; IMP biosynthesis via de novo pathway; formate from 10-formyl-5,6,7,8-tetrahydrofolate: step 1/1. Functionally, catalyzes the hydrolysis of 10-formyltetrahydrofolate (formyl-FH4) to formate and tetrahydrofolate (FH4). This Corynebacterium sp. (strain P-1) protein is Formyltetrahydrofolate deformylase.